The primary structure comprises 91 residues: C-C motif chemokine 5 (91 aa).

The first 23 residues, M1–A23, serve as a signal peptide directing secretion. Cystine bridges form between C33–C57 and C34–C73.

It belongs to the intercrine beta (chemokine CC) family. As to expression, T-cell and macrophage specific.

The protein resides in the secreted. In terms of biological role, chemoattractant for blood monocytes, memory T-helper cells and eosinophils. Causes the release of histamine from basophils and activates eosinophils. May activate several chemokine receptors including CCR1, CCR3, CCR4 and CCR5. May also be an agonist of the G protein-coupled receptor GPR75. Together with GPR75, may play a role in neuron survival through activation of a downstream signaling pathway involving the PI3, Akt and MAP kinases. By activating GPR75 may also play a role in insulin secretion by islet cells. This is C-C motif chemokine 5 (Ccl5) from Mus musculus (Mouse).